A 159-amino-acid polypeptide reads, in one-letter code: Ribosomal RNA large subunit methyltransferase H (159 aa).

S-adenosyl-L-methionine is bound by residues L76, G108, and 127-132; that span reads FGLLTL.

Belongs to the RNA methyltransferase RlmH family. Homodimer.

The protein localises to the cytoplasm. It catalyses the reaction pseudouridine(1915) in 23S rRNA + S-adenosyl-L-methionine = N(3)-methylpseudouridine(1915) in 23S rRNA + S-adenosyl-L-homocysteine + H(+). In terms of biological role, specifically methylates the pseudouridine at position 1915 (m3Psi1915) in 23S rRNA. The polypeptide is Ribosomal RNA large subunit methyltransferase H (Streptococcus equi subsp. zooepidemicus (strain MGCS10565)).